We begin with the raw amino-acid sequence, 475 residues long: Ribulose bisphosphate carboxylase large chain (475 aa).

K14 carries the N6,N6,N6-trimethyllysine modification. Positions 123 and 173 each coordinate substrate. The active-site Proton acceptor is K175. Residue K177 participates in substrate binding. The Mg(2+) site is built by K201, D203, and E204. Residue K201 is modified to N6-carboxylysine. The Proton acceptor role is filled by H294. Substrate-binding residues include R295, H327, and S379.

Belongs to the RuBisCO large chain family. Type I subfamily. As to quaternary structure, heterohexadecamer of 8 large chains and 8 small chains; disulfide-linked. The disulfide link is formed within the large subunit homodimers. Requires Mg(2+) as cofactor. In terms of processing, the disulfide bond which can form in the large chain dimeric partners within the hexadecamer appears to be associated with oxidative stress and protein turnover.

It localises to the plastid. Its subcellular location is the chloroplast. The enzyme catalyses 2 (2R)-3-phosphoglycerate + 2 H(+) = D-ribulose 1,5-bisphosphate + CO2 + H2O. The catalysed reaction is D-ribulose 1,5-bisphosphate + O2 = 2-phosphoglycolate + (2R)-3-phosphoglycerate + 2 H(+). In terms of biological role, ruBisCO catalyzes two reactions: the carboxylation of D-ribulose 1,5-bisphosphate, the primary event in carbon dioxide fixation, as well as the oxidative fragmentation of the pentose substrate in the photorespiration process. Both reactions occur simultaneously and in competition at the same active site. This is Ribulose bisphosphate carboxylase large chain from Actinidia chinensis (Kiwi).